Reading from the N-terminus, the 276-residue chain is MKKWIVLALTVTFWGLAFTAIKYSVRFLSPIAIASLRFAIANTLFAVIIILGKRIKWKDLPKVFALGIFGVSVYHVFLNLGEVYISSGVASVVISLAPIFVLILSAIFLRERITYSKVVGIIIAFLGVVVISEPSYANIYGIALVMVSTVAAAIYTTFGKSLLSKYNPITLTSNAMVLGSIPLYPFLPDSIRSLGGDLNLIGSIVFLGIFSTFFGYLGWYYFLEKEEASRASVFLLAIPVVSLLAGNILLAEPLTLRTVAGSGLVLLGIYIVVRKR.

A run of 10 helical transmembrane segments spans residues 5 to 25, 31 to 51, 63 to 83, 89 to 109, 119 to 139, 142 to 162, 168 to 188, 200 to 220, 231 to 251, and 253 to 273; these read IVLALTVTFWGLAFTAIKYSV, IAIASLRFAIANTLFAVIIIL, VFALGIFGVSVYHVFLNLGEV, VASVVISLAPIFVLILSAIFL, VGIIIAFLGVVVISEPSYANI, IALVMVSTVAAAIYTTFGKSL, PITLTSNAMVLGSIPLYPFLP, LIGSIVFLGIFSTFFGYLGWY, ASVFLLAIPVVSLLAGNILLA, and PLTLRTVAGSGLVLLGIYIVV. EamA domains lie at 12–133 and 150–274; these read TFWG…VISE and VAAA…IVVR.

It belongs to the EamA transporter family.

The protein localises to the cell membrane. This is an uncharacterized protein from Archaeoglobus fulgidus (strain ATCC 49558 / DSM 4304 / JCM 9628 / NBRC 100126 / VC-16).